The primary structure comprises 344 residues: Mitochondrial genome maintenance exonuclease 1 (344 aa).

Active-site residues include Asp-238, Asp-251, and Lys-253. Ser-343 is subject to Phosphoserine.

It belongs to the MGME1 family.

The protein resides in the mitochondrion. In terms of biological role, metal-dependent single-stranded DNA (ssDNA) exonuclease involved in mitochondrial genome maintenance. Has preference for 5'-3' exonuclease activity but is also capable of endonuclease activity on linear substrates. Necessary for maintenance of proper 7S DNA levels. Probably involved in mitochondrial DNA (mtDNA) repair, possibly via the processing of displaced DNA containing Okazaki fragments during RNA-primed DNA synthesis on the lagging strand or via processing of DNA flaps during long-patch base excision repair. Specifically binds 5-hydroxymethylcytosine (5hmC)-containing DNA in stem cells. This Homo sapiens (Human) protein is Mitochondrial genome maintenance exonuclease 1.